Here is a 321-residue protein sequence, read N- to C-terminus: tRNA(Ile)-lysidine synthase (321 aa).

20–25 provides a ligand contact to ATP; that stretch reads SGGADS.

This sequence belongs to the tRNA(Ile)-lysidine synthase family.

The protein localises to the cytoplasm. The catalysed reaction is cytidine(34) in tRNA(Ile2) + L-lysine + ATP = lysidine(34) in tRNA(Ile2) + AMP + diphosphate + H(+). In terms of biological role, ligates lysine onto the cytidine present at position 34 of the AUA codon-specific tRNA(Ile) that contains the anticodon CAU, in an ATP-dependent manner. Cytidine is converted to lysidine, thus changing the amino acid specificity of the tRNA from methionine to isoleucine. The sequence is that of tRNA(Ile)-lysidine synthase from Bordetella pertussis (strain Tohama I / ATCC BAA-589 / NCTC 13251).